Here is a 699-residue protein sequence, read N- to C-terminus: Kinesin-II 85 kDa subunit (699 aa).

The region spanning 10 to 342 (NVRVVVRCRP…LRYANRAKNI (333 aa)) is the Kinesin motor domain. 97-104 (GQTGTGKT) is a binding site for ATP. A coiled-coil region spans residues 341 to 619 (NIKNKAKINE…EDIGEWQLKC (279 aa)). Disordered stretches follow at residues 369–415 (KQIS…LSPE), 432–456 (EEKK…ESEL), and 660–699 (GMKY…ALLQ). Residues 376-395 (EGLDDDEESGSEESGDEEAG) show a composition bias toward acidic residues. Residues 400–411 (KKKRKGKNPKRK) are compositionally biased toward basic residues. The tract at residues 620-699 (VAYTGNNMRK…MASSIDALLQ (80 aa)) is globular. The span at 667–679 (QGKSGRPKTSSGR) shows a compositional bias: polar residues.

It belongs to the TRAFAC class myosin-kinesin ATPase superfamily. Kinesin family. Kinesin II subfamily. As to quaternary structure, heterotrimer of a 115 kDa subunit (KAP115) and two kinesin-like subunits of 95 kDa (KRP95) and 85 kDa (KRP85). In terms of processing, the N-terminus is blocked.

The protein localises to the cytoplasm. It is found in the cytoskeleton. This is Kinesin-II 85 kDa subunit (KRP85) from Strongylocentrotus purpuratus (Purple sea urchin).